The chain runs to 165 residues: NADPH-dependent 7-cyano-7-deazaguanine reductase (165 aa).

Cys56 serves as the catalytic Thioimide intermediate. Asp63 serves as the catalytic Proton donor. Substrate contacts are provided by residues Val78–Ser80 and His97–Glu98.

It belongs to the GTP cyclohydrolase I family. QueF type 1 subfamily.

Its subcellular location is the cytoplasm. The catalysed reaction is 7-aminomethyl-7-carbaguanine + 2 NADP(+) = 7-cyano-7-deazaguanine + 2 NADPH + 3 H(+). It functions in the pathway tRNA modification; tRNA-queuosine biosynthesis. Its function is as follows. Catalyzes the NADPH-dependent reduction of 7-cyano-7-deazaguanine (preQ0) to 7-aminomethyl-7-deazaguanine (preQ1). The protein is NADPH-dependent 7-cyano-7-deazaguanine reductase of Bacillus anthracis (strain A0248).